The sequence spans 572 residues: Chromatin assembly factor 1 subunit B (572 aa).

WD repeat units follow at residues 11–54 (HNKE…DGKA), 64–103 (RHTK…EPEQ), 127–166 (GHLE…KISI), 169–208 (EHKS…VAFN), 228–279 (FHDD…RPIA), 301–347 (RPVA…PFGY), and 351–392 (IHYH…IPLK). T401 bears the Phosphothreonine mark. The segment at 403-572 (DTAKKAKNQT…LAPDDSSKTV (170 aa)) is disordered. Positions 411 to 430 (QTHQGSSPGSRSVEGTPSNR) are enriched in polar residues. S416 carries the phosphoserine modification. A Phosphothreonine modification is found at T426. Residues 431–452 (TQDPSSPCTTPSPTTQSPAPSA) are compositionally biased toward low complexity. S436 bears the Phosphoserine mark. Position 440 is a phosphothreonine (T440). S456 and S465 each carry phosphoserine. The residue at position 501 (K501) is an N6-acetyllysine. A phosphothreonine mark is found at T502 and T510. Polar residues predominate over residues 511-529 (PLKTDTVPNPQPNSGTAPS). Over residues 546–559 (PELKRPRLEEREGD) the composition is skewed to basic and acidic residues.

The protein belongs to the WD repeat HIR1 family. In terms of assembly, subunit of the CAF-1 complex that contains RBBP4, CHAF1B and CHAF1A. CHAF1A binds directly to CHAF1B. Interacts with histones H3.1, H3.2 and H3.1t.

It localises to the nucleus. The protein localises to the cytoplasm. Functionally, acts as a component of the histone chaperone complex chromatin assembly factor 1 (CAF-1), which assembles histone octamers onto DNA during replication and repair. CAF-1 performs the first step of the nucleosome assembly process, bringing newly synthesized histones H3 and H4 to replicating DNA; histones H2A/H2B can bind to this chromatin precursor subsequent to DNA replication to complete the histone octamer. The sequence is that of Chromatin assembly factor 1 subunit B from Mus musculus (Mouse).